Here is a 291-residue protein sequence, read N- to C-terminus: Dihydroorotate dehydrogenase A (fumarate) (291 aa).

FMN is bound by residues Ser-18 and Lys-42–Ser-43. Substrate contacts are provided by residues Lys-42, Asn-66 to Leu-70, and Asn-126. FMN is bound at residue Asn-126. Residue Cys-129 is the Nucleophile of the active site. The FMN site is built by Lys-164 and Ile-190. Asn-191–Thr-192 lines the substrate pocket. FMN is bound by residues Gly-216, Gly-242–Gly-243, and Gly-264–Ser-265.

It belongs to the dihydroorotate dehydrogenase family. Type 1 subfamily. In terms of assembly, homodimer. It depends on FMN as a cofactor.

The protein localises to the cytoplasm. The enzyme catalyses (S)-dihydroorotate + fumarate = orotate + succinate. It functions in the pathway pyrimidine metabolism; UMP biosynthesis via de novo pathway. Functionally, catalyzes the conversion of dihydroorotate to orotate with fumarate as the electron acceptor. This is Dihydroorotate dehydrogenase A (fumarate) (pyrD) from Lacticaseibacillus paracasei (strain ATCC 334 / BCRC 17002 / CCUG 31169 / CIP 107868 / KCTC 3260 / NRRL B-441) (Lactobacillus paracasei).